Here is a 367-residue protein sequence, read N- to C-terminus: Cell-death-related nuclease 7 (367 aa).

A signal peptide spans 1-18; it reads MRLYFVLIFSVIFTTGNG. Asn-253 carries N-linked (GlcNAc...) asparagine glycosylation.

Belongs to the DNase II family.

This chain is Cell-death-related nuclease 7 (crn-7), found in Caenorhabditis elegans.